The following is a 210-amino-acid chain: UPF0301 protein Mnod_6933 (210 aa).

Belongs to the UPF0301 (AlgH) family.

The sequence is that of UPF0301 protein Mnod_6933 from Methylobacterium nodulans (strain LMG 21967 / CNCM I-2342 / ORS 2060).